The chain runs to 94 residues: Pyrimidine/purine nucleoside phosphorylase (94 aa).

It belongs to the nucleoside phosphorylase PpnP family.

The enzyme catalyses a purine D-ribonucleoside + phosphate = a purine nucleobase + alpha-D-ribose 1-phosphate. It carries out the reaction adenosine + phosphate = alpha-D-ribose 1-phosphate + adenine. The catalysed reaction is cytidine + phosphate = cytosine + alpha-D-ribose 1-phosphate. It catalyses the reaction guanosine + phosphate = alpha-D-ribose 1-phosphate + guanine. The enzyme catalyses inosine + phosphate = alpha-D-ribose 1-phosphate + hypoxanthine. It carries out the reaction thymidine + phosphate = 2-deoxy-alpha-D-ribose 1-phosphate + thymine. The catalysed reaction is uridine + phosphate = alpha-D-ribose 1-phosphate + uracil. It catalyses the reaction xanthosine + phosphate = alpha-D-ribose 1-phosphate + xanthine. Catalyzes the phosphorolysis of diverse nucleosides, yielding D-ribose 1-phosphate and the respective free bases. Can use uridine, adenosine, guanosine, cytidine, thymidine, inosine and xanthosine as substrates. Also catalyzes the reverse reactions. This Pseudomonas putida (strain W619) protein is Pyrimidine/purine nucleoside phosphorylase.